A 576-amino-acid polypeptide reads, in one-letter code: Putative export ATP-binding/permease protein RT0691 (576 aa).

The region spanning L20–L303 is the ABC transmembrane type-1 domain. A run of 6 helical transmembrane segments spans residues I21–F41, I61–F81, F135–F155, F158–F178, A242–I262, and I277–L297. Residues I336–E572 form the ABC transporter domain. G371–S378 contributes to the ATP binding site.

The protein belongs to the ABC transporter superfamily. In terms of assembly, homodimer.

Its subcellular location is the cell inner membrane. Its function is as follows. Part of an ABC transporter complex. Transmembrane domains (TMD) form a pore in the inner membrane and the ATP-binding domain (NBD) is responsible for energy generation. This is Putative export ATP-binding/permease protein RT0691 from Rickettsia typhi (strain ATCC VR-144 / Wilmington).